The primary structure comprises 508 residues: Protein FAM227B (508 aa).

Disordered stretches follow at residues 1–22 and 485–508; these read MAGQRTCQRRSSRAGPGKMQEP and ASLSSSSSSSPSSTDNYNFEEEEY. Low complexity predominate over residues 486-497; it reads SLSSSSSSSPSS.

This sequence belongs to the FAM227 family.

This chain is Protein FAM227B (FAM227B), found in Homo sapiens (Human).